A 636-amino-acid polypeptide reads, in one-letter code: Chaperone protein DnaK2 (636 aa).

Phosphothreonine; by autocatalysis is present on threonine 198. Over residues glutamate 604–threonine 618 the composition is skewed to low complexity. The segment at glutamate 604–lysine 636 is disordered. Over residues aspartate 625–lysine 636 the composition is skewed to acidic residues.

The protein belongs to the heat shock protein 70 family.

In terms of biological role, acts as a chaperone. In Synechocystis sp. (strain ATCC 27184 / PCC 6803 / Kazusa), this protein is Chaperone protein DnaK2 (dnaK2).